A 165-amino-acid chain; its full sequence is UPF0114 protein ESA_00283 (165 aa).

3 helical membrane passes run 15 to 35, 53 to 73, and 136 to 156; these read LLAPVYFGLSLALLALTVKFF, LILLLLSLVDMTLVGGLLVMV, and LMWYVIIHLTFVLSAFVMGYL.

Belongs to the UPF0114 family.

It localises to the cell membrane. The chain is UPF0114 protein ESA_00283 from Cronobacter sakazakii (strain ATCC BAA-894) (Enterobacter sakazakii).